Consider the following 216-residue polypeptide: Redox-sensing transcriptional repressor Rex (216 aa).

A DNA-binding region (H-T-H motif) is located at residues 20-59 (QYYRLFKSLVEENVTRTNSQLISEKIGVDAATIRRDFSLF). Position 94–99 (94–99 (GVGNLG)) interacts with NAD(+).

This sequence belongs to the transcriptional regulatory Rex family. Homodimer.

It is found in the cytoplasm. Functionally, modulates transcription in response to changes in cellular NADH/NAD(+) redox state. The chain is Redox-sensing transcriptional repressor Rex from Lactococcus lactis subsp. cremoris (strain SK11).